The chain runs to 527 residues: MNNTEIIENASKVLEAIDAAKEEELRNLNSLVQPRAPLNAGSTPGEIINEIKHLSTRDQEGGTSSKDEEESGAGRTVAEGAATRDHKYSKSRPKKQPRSGLQSGAAGKNPTPDGEGGDTCNRELDQHSDGDGHSNTEGASSDLASIQPCQTDDAPCSSTSYLDEEDEPAVRPKTQCKQSGLIESKEDEDGMLSELHEQHKGRSKRLSALGRVNSSPIPSPRPDELLKKGIGESIVWSGRMTESLLSHGVIQCVPGSDRYQSGKSVSVADAHLNARSACWTQNKEPQCHITNSPSDTSTDNASRSELRTIEEEDYLQDDDFEQSIEDRDFDPGDWDPSDKHNDNGLLLQILKNQEEILNRLKTIGSIQESLDSIKRIQSKQGLALSTLEGLLSSVMIAIPGSGNPGSSVEINPDLKPMLGRNKNRALKEVSDELTPPNQFLQKQGMTIQQAVKPKETMFPPAIKTGESSAKGFHPKENLVSRTVINSIITARVNNPELAAKLKLAVAKAQTKEELERIHKSIIKNLKN.

2 disordered regions span residues Asn29–Leu225 and Pro285–Asp319. Composition is skewed to basic and acidic residues over residues Asn49–Glu60 and Cys120–Ser134. Polar residues-rich tracts occupy residues Asn135–Tyr161 and Pro285–Ala301. Over residues Glu310–Asp319 the composition is skewed to acidic residues. The segment at Glu312–Gly400 is multimerization. The interaction with the nucleocapsid (N-RNA) stretch occupies residues Val479–Asn527.

Belongs to the morbillivirus P protein family. In terms of assembly, homotetramer. Interacts (via multimerization domain) with polymerase L; this interaction forms the polymerase L-P complex. Interacts (via N-terminus) with N0 (via Ncore); this interaction allows P to chaperon N0 to avoid N polymerization before encapsidation. Interacts (via C-terminus) with N-RNA template; this interaction positions the polymerase on the template for both transcription and replication.

Its subcellular location is the host cytoplasm. In terms of biological role, essential cofactor of the RNA polymerase L that plays a central role in the transcription and replication by forming the polymerase complex with RNA polymerase L and recruiting L to the genomic N-RNA template for RNA synthesis. Also plays a central role in the encapsidation of nascent RNA chains by forming the encapsidation complex with the nucleocapsid protein N (N-P complex). Acts as a chaperone for newly synthesized free N protein, so-called N0, allowing encapsidation of nascent RNA chains during replication. The nucleoprotein protein N prevents excessive phosphorylation of P, which leads to down-regulation of viral transcription/ replication. Participates, together with N, in the formation of viral factories (viroplasms), which are large inclusions in the host cytoplasm where replication takes place. This chain is Phosphoprotein (P/V), found in Tupaia paramyxovirus (TPMV).